Here is a 361-residue protein sequence, read N- to C-terminus: Mitochondrial fission regulator 2 (361 aa).

A Phosphoserine modification is found at serine 137. 2 disordered regions span residues 191 to 286 (FIDL…VPNM) and 298 to 322 (LRPV…EWDP). Residues 219 to 231 (VLPPPPPPPPPPQ) show a composition bias toward pro residues. Residues 232–244 (FSLQPPSSLPMQP) show a composition bias toward low complexity. Positions 250 to 282 (HDIDSLATEMERQLSGVKKTDDSHHSKSQRLRD) are enriched in basic and acidic residues. Phosphoserine is present on residues serine 304 and serine 340.

It belongs to the MTFR1 family. In terms of tissue distribution, expressed predominantly in testis (at protein level). Expressed to a lower extent in spleen.

It localises to the mitochondrion. In terms of biological role, may play a role in mitochondrial aerobic respiration essentially in the testis. Can also promote mitochondrial fission. The chain is Mitochondrial fission regulator 2 (Mtfr2) from Mus musculus (Mouse).